Reading from the N-terminus, the 142-residue chain is Small ribosomal subunit protein uS12 (142 aa).

The protein belongs to the universal ribosomal protein uS12 family. As to quaternary structure, part of the 30S ribosomal subunit.

In terms of biological role, with S4 and S5 plays an important role in translational accuracy. Located at the interface of the 30S and 50S subunits. This chain is Small ribosomal subunit protein uS12, found in Archaeoglobus fulgidus (strain ATCC 49558 / DSM 4304 / JCM 9628 / NBRC 100126 / VC-16).